The primary structure comprises 67 residues: Gallinacin-6 (67 aa).

An N-terminal signal peptide occupies residues 1–19 (MRILYLLLSVLFVVLQGVA). Positions 20–25 (GQPYFS) are excised as a propeptide. Disulfide bonds link Cys-31–Cys-60, Cys-38–Cys-53, and Cys-43–Cys-61.

The protein belongs to the beta-defensin family. In terms of tissue distribution, expressed in bone marrow, testis, ovary, lung and trachea. Expressed in the ovarian stroma, but not in the ovarian follicles.

It localises to the secreted. The protein resides in the cytoplasmic granule. Has bactericidal activity. Potent activity against S.typhimurium and S.entiriditis. The protein is Gallinacin-6 (GAL6) of Gallus gallus (Chicken).